The following is a 353-amino-acid chain: Photosystem II D2 protein (353 aa).

A helical transmembrane segment spans residues 41 to 61 (TAYLALGGWLTGTTFVTSWYT). His118 is a chlorophyll a binding site. Residues 125–141 (GFMLRQFEISRLVGIRP) traverse the membrane as a helical segment. Residues Gln130 and Asn143 each contribute to the pheophytin a site. The helical transmembrane segment at 153-166 (VFVSVFLMYPLGQS) threads the bilayer. His198 lines the chlorophyll a pocket. Residues 208–228 (GALLCAIHGATVENTLYEDGE) traverse the membrane as a helical segment. Residues His215 and Phe262 each coordinate a plastoquinone. Fe cation is bound at residue His215. His269 serves as a coordination point for Fe cation. Residues 279–295 (GLWTSSIGIIGLALNLR) traverse the membrane as a helical segment.

This sequence belongs to the reaction center PufL/M/PsbA/D family. PSII is composed of 1 copy each of membrane proteins PsbA, PsbB, PsbC, PsbD, PsbE, PsbF, PsbH, PsbI, PsbJ, PsbK, PsbL, PsbM, PsbT, PsbX, PsbY, PsbZ, Psb30/Ycf12, peripheral proteins PsbO, CyanoQ (PsbQ), PsbU, PsbV and a large number of cofactors. It forms dimeric complexes. The D1/D2 heterodimer binds P680, chlorophylls that are the primary electron donor of PSII, and subsequent electron acceptors. It shares a non-heme iron and each subunit binds pheophytin, quinone, additional chlorophylls, carotenoids and lipids. There is also a Cl(-1) ion associated with D1 and D2, which is required for oxygen evolution. The PSII complex binds additional chlorophylls, carotenoids and specific lipids. is required as a cofactor.

Its subcellular location is the host cellular thylakoid membrane. The catalysed reaction is 2 a plastoquinone + 4 hnu + 2 H2O = 2 a plastoquinol + O2. Its function is as follows. Photosystem II (PSII) is a light-driven water:plastoquinone oxidoreductase that uses light energy to abstract electrons from H(2)O, generating O(2) and a proton gradient subsequently used for ATP formation. It consists of a core antenna complex that captures photons, and an electron transfer chain that converts photonic excitation into a charge separation. The D1/D2 (PsbA/PsbD) reaction center heterodimer binds P680, the primary electron donor of PSII as well as several subsequent electron acceptors. D2 is needed for assembly of a stable PSII complex. The polypeptide is Photosystem II D2 protein (psbD) (Synechococcus phage S-PM2).